A 103-amino-acid chain; its full sequence is UPF0145 protein EF_0241 (103 aa).

This sequence belongs to the UPF0145 family.

The sequence is that of UPF0145 protein EF_0241 from Enterococcus faecalis (strain ATCC 700802 / V583).